Consider the following 160-residue polypeptide: G-protein-signaling modulator 3 (160 aa).

The segment at 1 to 55 is disordered; the sequence is MEAERPQEEEDGEQGPPQDEEGWPPPNSTTRPWRSAPPSPPPPGTRHTALGPRSA. Over residues 7–22 the composition is skewed to acidic residues; sequence QEEEDGEQGPPQDEEG. 4 positions are modified to phosphoserine: Ser-35, Ser-39, Ser-56, and Ser-59. Residues 35-44 are compositionally biased toward pro residues; that stretch reads SAPPSPPPPG. Thr-62 carries the post-translational modification Phosphothreonine. GoLoco domains lie at 62–84, 104–126, and 132–155; these read TELL…RATF, REQL…RSEP, and GQEL…RSRP.

As to expression, expressed in heart, placenta, lung and liver.

The protein localises to the cytoplasm. Its function is as follows. Interacts with subunit of G(i) alpha proteins and regulates the activation of G(i) alpha proteins. In Homo sapiens (Human), this protein is G-protein-signaling modulator 3 (GPSM3).